The following is a 209-amino-acid chain: Large ribosomal subunit protein uL3 (209 aa).

The interval G118–N152 is disordered.

Belongs to the universal ribosomal protein uL3 family. In terms of assembly, part of the 50S ribosomal subunit. Forms a cluster with proteins L14 and L19.

Its function is as follows. One of the primary rRNA binding proteins, it binds directly near the 3'-end of the 23S rRNA, where it nucleates assembly of the 50S subunit. The sequence is that of Large ribosomal subunit protein uL3 from Bacillus licheniformis (strain ATCC 14580 / DSM 13 / JCM 2505 / CCUG 7422 / NBRC 12200 / NCIMB 9375 / NCTC 10341 / NRRL NRS-1264 / Gibson 46).